Consider the following 342-residue polypeptide: Heat-inducible transcription repressor HrcA (342 aa).

Belongs to the HrcA family.

In terms of biological role, negative regulator of class I heat shock genes (grpE-dnaK-dnaJ and groELS operons). Prevents heat-shock induction of these operons. The polypeptide is Heat-inducible transcription repressor HrcA (Leptospira interrogans serogroup Icterohaemorrhagiae serovar copenhageni (strain Fiocruz L1-130)).